A 396-amino-acid chain; its full sequence is Mannonate dehydratase (396 aa).

This sequence belongs to the mannonate dehydratase family. Requires Fe(2+) as cofactor. Mn(2+) is required as a cofactor.

The enzyme catalyses D-mannonate = 2-dehydro-3-deoxy-D-gluconate + H2O. The protein operates within carbohydrate metabolism; pentose and glucuronate interconversion. In terms of biological role, catalyzes the dehydration of D-mannonate. In Enterobacter sp. (strain 638), this protein is Mannonate dehydratase.